Reading from the N-terminus, the 482-residue chain is Membrane-bound lytic murein transglycosylase F (482 aa).

Residues 1–18 (MKGLFLRIITALALLFWA) form the signal peptide. The segment at 19-267 (IDMVFPWQFL…NLKEKYLGHI (249 aa)) is non-LT domain. Positions 268–482 (SQFDYVDTRS…NLEEIKENKD (215 aa)) are LT domain. Glu312 is a catalytic residue. Polar residues predominate over residues 457 to 470 (ENQTTNDNANNESA). The segment at 457–482 (ENQTTNDNANNESAVKNLEEIKENKD) is disordered. Positions 473 to 482 (NLEEIKENKD) are enriched in basic and acidic residues.

The protein in the N-terminal section; belongs to the bacterial solute-binding protein 3 family. It in the C-terminal section; belongs to the transglycosylase Slt family.

It localises to the cell outer membrane. It carries out the reaction Exolytic cleavage of the (1-&gt;4)-beta-glycosidic linkage between N-acetylmuramic acid (MurNAc) and N-acetylglucosamine (GlcNAc) residues in peptidoglycan, from either the reducing or the non-reducing ends of the peptidoglycan chains, with concomitant formation of a 1,6-anhydrobond in the MurNAc residue.. In terms of biological role, murein-degrading enzyme that degrades murein glycan strands and insoluble, high-molecular weight murein sacculi, with the concomitant formation of a 1,6-anhydromuramoyl product. Lytic transglycosylases (LTs) play an integral role in the metabolism of the peptidoglycan (PG) sacculus. Their lytic action creates space within the PG sacculus to allow for its expansion as well as for the insertion of various structures such as secretion systems and flagella. The protein is Membrane-bound lytic murein transglycosylase F of Haemophilus influenzae (strain 86-028NP).